Reading from the N-terminus, the 92-residue chain is Small ribosomal subunit protein uS19c (92 aa).

The protein belongs to the universal ribosomal protein uS19 family.

The protein localises to the plastid. It is found in the chloroplast. Protein S19 forms a complex with S13 that binds strongly to the 16S ribosomal RNA. This is Small ribosomal subunit protein uS19c from Acorus calamus (Sweet flag).